The following is a 29-amino-acid chain: Cytochrome b6-f complex subunit 8 (29 aa).

Residues 3 to 23 (IDVLGWVALLVVFTWSIAMVV) form a helical membrane-spanning segment.

It belongs to the PetN family. The 4 large subunits of the cytochrome b6-f complex are cytochrome b6, subunit IV (17 kDa polypeptide, PetD), cytochrome f and the Rieske protein, while the 4 small subunits are PetG, PetL, PetM and PetN. The complex functions as a dimer.

Its subcellular location is the cellular thylakoid membrane. Its function is as follows. Component of the cytochrome b6-f complex, which mediates electron transfer between photosystem II (PSII) and photosystem I (PSI), cyclic electron flow around PSI, and state transitions. The sequence is that of Cytochrome b6-f complex subunit 8 from Mastigocladus laminosus (Fischerella sp.).